The primary structure comprises 245 residues: tRNA pseudouridine synthase A (245 aa).

Asp52 serves as the catalytic Nucleophile. A substrate-binding site is contributed by Tyr110.

It belongs to the tRNA pseudouridine synthase TruA family. Homodimer.

The catalysed reaction is uridine(38/39/40) in tRNA = pseudouridine(38/39/40) in tRNA. Its function is as follows. Formation of pseudouridine at positions 38, 39 and 40 in the anticodon stem and loop of transfer RNAs. This is tRNA pseudouridine synthase A from Borrelia hermsii (strain HS1 / DAH).